A 271-amino-acid chain; its full sequence is Dermonecrotic toxin LhSicTox-alphaIA2bv (271 aa).

The active site involves histidine 3. Mg(2+)-binding residues include glutamate 23 and aspartate 25. 2 disulfides stabilise this stretch: cysteine 43-cysteine 49 and cysteine 45-cysteine 188. Aspartate 83 is a binding site for Mg(2+).

Belongs to the arthropod phospholipase D family. Class II subfamily. Requires Mg(2+) as cofactor. In terms of tissue distribution, expressed by the venom gland.

It is found in the secreted. It carries out the reaction an N-(acyl)-sphingosylphosphocholine = an N-(acyl)-sphingosyl-1,3-cyclic phosphate + choline. The enzyme catalyses an N-(acyl)-sphingosylphosphoethanolamine = an N-(acyl)-sphingosyl-1,3-cyclic phosphate + ethanolamine. The catalysed reaction is a 1-acyl-sn-glycero-3-phosphocholine = a 1-acyl-sn-glycero-2,3-cyclic phosphate + choline. It catalyses the reaction a 1-acyl-sn-glycero-3-phosphoethanolamine = a 1-acyl-sn-glycero-2,3-cyclic phosphate + ethanolamine. In terms of biological role, dermonecrotic toxins cleave the phosphodiester linkage between the phosphate and headgroup of certain phospholipids (sphingolipid and lysolipid substrates), forming an alcohol (often choline) and a cyclic phosphate. This toxin acts on sphingomyelin (SM). It may also act on ceramide phosphoethanolamine (CPE), lysophosphatidylcholine (LPC) and lysophosphatidylethanolamine (LPE), but not on lysophosphatidylserine (LPS), and lysophosphatidylglycerol (LPG). It acts by transphosphatidylation, releasing exclusively cyclic phosphate products as second products. Induces dermonecrosis, hemolysis, increased vascular permeability, edema, inflammatory response, and platelet aggregation. The sequence is that of Dermonecrotic toxin LhSicTox-alphaIA2bv from Loxosceles hirsuta (Recluse spider).